Here is a 198-residue protein sequence, read N- to C-terminus: Recombination protein RecR (198 aa).

A C4-type zinc finger spans residues 57 to 72 (CRVCANIADENPCGIC). One can recognise a Toprim domain in the interval 80–175 (GLICVVERPR…RVTRLAFGLP (96 aa)).

Belongs to the RecR family.

Functionally, may play a role in DNA repair. It seems to be involved in an RecBC-independent recombinational process of DNA repair. It may act with RecF and RecO. The chain is Recombination protein RecR from Desulforudis audaxviator (strain MP104C).